Reading from the N-terminus, the 124-residue chain is Small ribosomal subunit protein uS12 (124 aa).

3-methylthioaspartic acid is present on D89.

This sequence belongs to the universal ribosomal protein uS12 family. As to quaternary structure, part of the 30S ribosomal subunit. Contacts proteins S8 and S17. May interact with IF1 in the 30S initiation complex.

Functionally, with S4 and S5 plays an important role in translational accuracy. Its function is as follows. Interacts with and stabilizes bases of the 16S rRNA that are involved in tRNA selection in the A site and with the mRNA backbone. Located at the interface of the 30S and 50S subunits, it traverses the body of the 30S subunit contacting proteins on the other side and probably holding the rRNA structure together. The combined cluster of proteins S8, S12 and S17 appears to hold together the shoulder and platform of the 30S subunit. This chain is Small ribosomal subunit protein uS12, found in Treponema pallidum subsp. pallidum (strain SS14).